The following is a 378-amino-acid chain: Probable 3-hydroxyisobutyryl-CoA hydrolase 2 (378 aa).

Positions 115, 138, and 146 each coordinate substrate. The Microbody targeting signal motif lies at 376-378 (AKL).

This sequence belongs to the enoyl-CoA hydratase/isomerase family.

Its subcellular location is the peroxisome. It carries out the reaction 3-hydroxy-2-methylpropanoyl-CoA + H2O = 3-hydroxy-2-methylpropanoate + CoA + H(+). The protein operates within amino-acid degradation; L-valine degradation. Involved in valine catabolism. The polypeptide is Probable 3-hydroxyisobutyryl-CoA hydrolase 2 (Arabidopsis thaliana (Mouse-ear cress)).